Here is a 228-residue protein sequence, read N- to C-terminus: tRNA (guanine-N(1)-)-methyltransferase (228 aa).

Residues glycine 111 and 130–135 (IGDFVL) contribute to the S-adenosyl-L-methionine site.

It belongs to the RNA methyltransferase TrmD family. As to quaternary structure, homodimer.

The protein resides in the cytoplasm. The catalysed reaction is guanosine(37) in tRNA + S-adenosyl-L-methionine = N(1)-methylguanosine(37) in tRNA + S-adenosyl-L-homocysteine + H(+). Functionally, specifically methylates guanosine-37 in various tRNAs. The sequence is that of tRNA (guanine-N(1)-)-methyltransferase from Ureaplasma urealyticum serovar 10 (strain ATCC 33699 / Western).